A 726-amino-acid chain; its full sequence is uncharacterized protein (726 aa).

Residues Ser-583 and His-698 each act as charge relay system in the active site.

Belongs to the peptidase S9B family.

This is an uncharacterized protein from Sinorhizobium fredii (strain NBRC 101917 / NGR234).